We begin with the raw amino-acid sequence, 293 residues long: Pyridoxal 5'-phosphate synthase subunit PdxS (293 aa).

Asp-23 serves as a coordination point for D-ribose 5-phosphate. Lys-80 serves as the catalytic Schiff-base intermediate with D-ribose 5-phosphate. A D-ribose 5-phosphate-binding site is contributed by Gly-152. Arg-164 contacts D-glyceraldehyde 3-phosphate. D-ribose 5-phosphate contacts are provided by residues Gly-213 and 234 to 235 (GS).

It belongs to the PdxS/SNZ family. In terms of assembly, in the presence of PdxT, forms a dodecamer of heterodimers.

The catalysed reaction is aldehydo-D-ribose 5-phosphate + D-glyceraldehyde 3-phosphate + L-glutamine = pyridoxal 5'-phosphate + L-glutamate + phosphate + 3 H2O + H(+). It participates in cofactor biosynthesis; pyridoxal 5'-phosphate biosynthesis. Its function is as follows. Catalyzes the formation of pyridoxal 5'-phosphate from ribose 5-phosphate (RBP), glyceraldehyde 3-phosphate (G3P) and ammonia. The ammonia is provided by the PdxT subunit. Can also use ribulose 5-phosphate and dihydroxyacetone phosphate as substrates, resulting from enzyme-catalyzed isomerization of RBP and G3P, respectively. The sequence is that of Pyridoxal 5'-phosphate synthase subunit PdxS from Niallia circulans (Bacillus circulans).